A 295-amino-acid chain; its full sequence is Bifunctional protein FolD (295 aa).

NADP(+)-binding positions include 175–177 (GVS) and Ile243.

It belongs to the tetrahydrofolate dehydrogenase/cyclohydrolase family. In terms of assembly, homodimer.

It catalyses the reaction (6R)-5,10-methylene-5,6,7,8-tetrahydrofolate + NADP(+) = (6R)-5,10-methenyltetrahydrofolate + NADPH. The enzyme catalyses (6R)-5,10-methenyltetrahydrofolate + H2O = (6R)-10-formyltetrahydrofolate + H(+). The protein operates within one-carbon metabolism; tetrahydrofolate interconversion. Functionally, catalyzes the oxidation of 5,10-methylenetetrahydrofolate to 5,10-methenyltetrahydrofolate and then the hydrolysis of 5,10-methenyltetrahydrofolate to 10-formyltetrahydrofolate. In Xylella fastidiosa (strain 9a5c), this protein is Bifunctional protein FolD.